A 405-amino-acid chain; its full sequence is Arginine biosynthesis bifunctional protein ArgJ (405 aa).

Residues 1 to 18 show a composition bias toward polar residues; that stretch reads MTSADKNNPDTSTAQGSS. The disordered stretch occupies residues 1–21; sequence MTSADKNNPDTSTAQGSSADL. Substrate-binding residues include Thr167, Lys189, Thr200, Glu281, Asn400, and Thr405. Thr200 serves as the catalytic Nucleophile.

Belongs to the ArgJ family. In terms of assembly, heterotetramer of two alpha and two beta chains.

The protein resides in the cytoplasm. The catalysed reaction is N(2)-acetyl-L-ornithine + L-glutamate = N-acetyl-L-glutamate + L-ornithine. It catalyses the reaction L-glutamate + acetyl-CoA = N-acetyl-L-glutamate + CoA + H(+). The protein operates within amino-acid biosynthesis; L-arginine biosynthesis; L-ornithine and N-acetyl-L-glutamate from L-glutamate and N(2)-acetyl-L-ornithine (cyclic): step 1/1. It participates in amino-acid biosynthesis; L-arginine biosynthesis; N(2)-acetyl-L-ornithine from L-glutamate: step 1/4. Its function is as follows. Catalyzes two activities which are involved in the cyclic version of arginine biosynthesis: the synthesis of N-acetylglutamate from glutamate and acetyl-CoA as the acetyl donor, and of ornithine by transacetylation between N(2)-acetylornithine and glutamate. This is Arginine biosynthesis bifunctional protein ArgJ from Corynebacterium jeikeium (strain K411).